Reading from the N-terminus, the 537-residue chain is Efflux pump ustT (537 aa).

Residues 1-25 show a composition bias toward basic and acidic residues; it reads MAKEAQSLHELDNMKEKEVDQEKKA. Positions 1 to 50 are disordered; sequence MAKEAQSLHELDNMKEKEVDQEKKAPTSVGDQEEHDDPKKQASHSQNVSE. Asn-47 carries N-linked (GlcNAc...) asparagine glycosylation. The next 8 helical transmembrane spans lie at 71-91, 104-124, 137-157, 162-182, 193-213, 236-256, 266-286, and 304-324; these read PLAM…VSLL, WVYM…AGAM, GIGL…NAPL, MFLG…PLIG, WCFI…FFFV, LGSA…QWAG, IILL…SQML, and FGSF…TYWI. Asn-333 carries N-linked (GlcNAc...) asparagine glycosylation. 4 helical membrane passes run 339–359, 363–383, 397–417, and 430–450; these read AGIR…MGGG, LIGY…VGAG, WIGY…QASL, and TAIS…VCIG. N-linked (GlcNAc...) asparagine glycosylation occurs at Asn-501. Residues 507-527 traverse the membrane as a helical segment; sequence TFYVALAAGITSMLSAFLVQW.

This sequence belongs to the major facilitator superfamily. TCR/Tet family.

The protein resides in the cell membrane. In terms of biological role, efflux pump; part of the gene cluster that mediates the biosynthesis of ustilaginoidins, dimeric gamma-naphthopyrones isolated from different fungal species. This chain is Efflux pump ustT, found in Ustilaginoidea virens (Rice false smut fungus).